The sequence spans 179 residues: Large ribosomal subunit protein uL5 (179 aa).

This sequence belongs to the universal ribosomal protein uL5 family. In terms of assembly, part of the 50S ribosomal subunit; part of the 5S rRNA/L5/L18/L25 subcomplex. Contacts the 5S rRNA and the P site tRNA. Forms a bridge to the 30S subunit in the 70S ribosome.

Functionally, this is one of the proteins that bind and probably mediate the attachment of the 5S RNA into the large ribosomal subunit, where it forms part of the central protuberance. In the 70S ribosome it contacts protein S13 of the 30S subunit (bridge B1b), connecting the 2 subunits; this bridge is implicated in subunit movement. Contacts the P site tRNA; the 5S rRNA and some of its associated proteins might help stabilize positioning of ribosome-bound tRNAs. This chain is Large ribosomal subunit protein uL5, found in Rickettsia typhi (strain ATCC VR-144 / Wilmington).